Reading from the N-terminus, the 396-residue chain is Chaperone protein DnaJ (396 aa).

The J domain maps to 6 to 71 (DYYEVLEVTK…DKRSRYDQFG (66 aa)). The CR-type zinc-finger motif lies at 154-236 (GVEKKFKLKK…CGGDGIVYGE (83 aa)). Zn(2+) is bound by residues cysteine 167, cysteine 170, cysteine 184, cysteine 187, cysteine 210, cysteine 213, cysteine 224, and cysteine 227. CXXCXGXG motif repeat units follow at residues 167–174 (CNHCHGTG), 184–191 (CPTCKGSG), 210–217 (CPTCNGEG), and 224–231 (CKECGGDG).

Belongs to the DnaJ family. Homodimer. Requires Zn(2+) as cofactor.

The protein resides in the cytoplasm. In terms of biological role, participates actively in the response to hyperosmotic and heat shock by preventing the aggregation of stress-denatured proteins and by disaggregating proteins, also in an autonomous, DnaK-independent fashion. Unfolded proteins bind initially to DnaJ; upon interaction with the DnaJ-bound protein, DnaK hydrolyzes its bound ATP, resulting in the formation of a stable complex. GrpE releases ADP from DnaK; ATP binding to DnaK triggers the release of the substrate protein, thus completing the reaction cycle. Several rounds of ATP-dependent interactions between DnaJ, DnaK and GrpE are required for fully efficient folding. Also involved, together with DnaK and GrpE, in the DNA replication of plasmids through activation of initiation proteins. The protein is Chaperone protein DnaJ of Bacteroides thetaiotaomicron (strain ATCC 29148 / DSM 2079 / JCM 5827 / CCUG 10774 / NCTC 10582 / VPI-5482 / E50).